The sequence spans 510 residues: ATP synthase subunit alpha (510 aa).

Residue 169-176 (GDRQTGKT) coordinates ATP.

The protein belongs to the ATPase alpha/beta chains family. In terms of assembly, F-type ATPases have 2 components, CF(1) - the catalytic core - and CF(0) - the membrane proton channel. CF(1) has five subunits: alpha(3), beta(3), gamma(1), delta(1), epsilon(1). CF(0) has three main subunits: a(1), b(2) and c(9-12). The alpha and beta chains form an alternating ring which encloses part of the gamma chain. CF(1) is attached to CF(0) by a central stalk formed by the gamma and epsilon chains, while a peripheral stalk is formed by the delta and b chains.

It is found in the cell inner membrane. The catalysed reaction is ATP + H2O + 4 H(+)(in) = ADP + phosphate + 5 H(+)(out). In terms of biological role, produces ATP from ADP in the presence of a proton gradient across the membrane. The alpha chain is a regulatory subunit. This chain is ATP synthase subunit alpha, found in Methylobacterium radiotolerans (strain ATCC 27329 / DSM 1819 / JCM 2831 / NBRC 15690 / NCIMB 10815 / 0-1).